A 227-amino-acid chain; its full sequence is Esterase OVCA2 (227 aa).

Active-site charge relay system residues include Ser119, Asp179, and His206.

Belongs to the LovG family.

It carries out the reaction a carboxylic ester + H2O = an alcohol + a carboxylate + H(+). Its function is as follows. Exhibits ester hydrolase activity with a strong preference for long-chain alkyl ester substrates and high selectivity against a variety of short, branched, and substituted esters. Is able to hydrolyze ester bonds within a wide range of p-nitrophenyl derivatives (C2-C14) in vitro, with a strong preference toward substrates of &gt;8 carbons. The sequence is that of Esterase OVCA2 (OVCA2) from Bos taurus (Bovine).